Here is a 632-residue protein sequence, read N- to C-terminus: 1-deoxy-D-xylulose-5-phosphate synthase (632 aa).

Residues His-78 and 119 to 121 each bind thiamine diphosphate; that span reads AHS. Asp-150 contacts Mg(2+). Thiamine diphosphate-binding positions include 151–152, Asn-179, Tyr-286, and Glu-368; that span reads GA. A Mg(2+)-binding site is contributed by Asn-179.

The protein belongs to the transketolase family. DXPS subfamily. In terms of assembly, homodimer. The cofactor is Mg(2+). Thiamine diphosphate serves as cofactor.

It carries out the reaction D-glyceraldehyde 3-phosphate + pyruvate + H(+) = 1-deoxy-D-xylulose 5-phosphate + CO2. Its pathway is metabolic intermediate biosynthesis; 1-deoxy-D-xylulose 5-phosphate biosynthesis; 1-deoxy-D-xylulose 5-phosphate from D-glyceraldehyde 3-phosphate and pyruvate: step 1/1. Its function is as follows. Catalyzes the acyloin condensation reaction between C atoms 2 and 3 of pyruvate and glyceraldehyde 3-phosphate to yield 1-deoxy-D-xylulose-5-phosphate (DXP). The polypeptide is 1-deoxy-D-xylulose-5-phosphate synthase (Albidiferax ferrireducens (strain ATCC BAA-621 / DSM 15236 / T118) (Rhodoferax ferrireducens)).